Reading from the N-terminus, the 311-residue chain is Methionyl-tRNA formyltransferase (311 aa).

109-112 (SLLP) serves as a coordination point for (6S)-5,6,7,8-tetrahydrofolate.

This sequence belongs to the Fmt family.

It carries out the reaction L-methionyl-tRNA(fMet) + (6R)-10-formyltetrahydrofolate = N-formyl-L-methionyl-tRNA(fMet) + (6S)-5,6,7,8-tetrahydrofolate + H(+). Attaches a formyl group to the free amino group of methionyl-tRNA(fMet). The formyl group appears to play a dual role in the initiator identity of N-formylmethionyl-tRNA by promoting its recognition by IF2 and preventing the misappropriation of this tRNA by the elongation apparatus. The protein is Methionyl-tRNA formyltransferase of Moorella thermoacetica (strain ATCC 39073 / JCM 9320).